Reading from the N-terminus, the 466-residue chain is MALLTAAARLLGTKNASCLVLAARHASASSTNLKDILADLIPKEQARIKTFRQQHGKTVVGQITVDMMYGGMRGMKGLVYETSVLDPDEGIRFRGFSIPECQKLLPKAKGGEEPLPEGLFWLLVTGHIPTEEQVSWLSKEWAKRAALPSHVVTMLDNFPTNLHPMSQLSAAVTALNSESNFARAYAQGISRTKYWELIYEDSMDLIAKLPCVAAKIYRNLYREGSGIGAIDSNLDWSHNFTNMLGYTDHQFTELTRLYLTIHSDHEGGNVSAHTSHLVGSALSDPYLSFAAAMNGLAGPLHGLANQEVLVWLTQLQKEVGKDVSDEKLRDYIWNTLNSGRVVPGYGHAVLRKTDPRYTCQREFALKHLPNDPMFKLVAQLYKIVPNVLLEQGKAKNPWPNVDAHSGVLLQYYGMTEMNYYTVLFGVSRALGVLAQLIWSRALGFPLERPKSMSTEGLMKFVDSKSG.

Residues 1–27 (MALLTAAARLLGTKNASCLVLAARHAS) constitute a mitochondrion transit peptide. Positions 2–21 (ALLTAAARLLGTKNASCLVL) match the SIFI-degron motif. Lysine 57 is subject to N6-succinyllysine. Lysine 76 is modified (N6-acetyllysine; alternate). Lysine 76 carries the N6-succinyllysine; alternate modification. N6-succinyllysine is present on residues lysine 103 and lysine 193. Residue histidine 301 is part of the active site. N6-acetyllysine; alternate occurs at positions 321 and 327. Residues lysine 321 and lysine 327 each carry the N6-succinyllysine; alternate modification. The active site involves histidine 347. Oxaloacetate is bound at residue arginine 356. At lysine 375 the chain carries N6-acetyllysine; alternate. The residue at position 375 (lysine 375) is an N6-succinyllysine; alternate. Lysine 382 carries the post-translational modification N6-acetyllysine. Lysine 393 bears the N6-acetyllysine; alternate mark. Position 393 is an N6-succinyllysine; alternate (lysine 393). The residue at position 395 (lysine 395) is an N6,N6,N6-trimethyllysine. The active site involves aspartate 402. Oxaloacetate contacts are provided by arginine 428 and arginine 448. Lysine 450 is modified (N6-succinyllysine). An N6-acetyllysine; alternate modification is found at lysine 459. Position 459 is an N6-succinyllysine; alternate (lysine 459).

Belongs to the citrate synthase family. Homodimer. In terms of processing, methylated. Trimethylation at Lys-395 by CSKMT decreases citrate synthase activity. Post-translationally, in response to mitochondrial stress, the precursor protein is ubiquitinated by the SIFI complex in the cytoplasm before mitochondrial import, leading to its degradation. Within the SIFI complex, UBR4 initiates ubiquitin chain that are further elongated or branched by KCMF1.

Its subcellular location is the mitochondrion matrix. The enzyme catalyses oxaloacetate + acetyl-CoA + H2O = citrate + CoA + H(+). The protein operates within carbohydrate metabolism; tricarboxylic acid cycle; isocitrate from oxaloacetate: step 1/2. In terms of biological role, key enzyme of the Krebs tricarboxylic acid cycle which catalyzes the synthesis of citrate from acetyl coenzyme A and oxaloacetate. The sequence is that of Citrate synthase, mitochondrial (CS) from Homo sapiens (Human).